A 765-amino-acid polypeptide reads, in one-letter code: MKEKSKNAARTRREKENSEFYELAKLLPLPSAITSQLDKASIIRLTTSYLKMRVVFPEGLGEAWGHTSRTSPLDNVGRELGSHLLQTLDGFIFVVAPDGKIMYISETASVHLGLSQVELTGNSIYEYIHPADHDEMTAVLTAHQPYHSHFVQEYEIERSFFLRMKCVLAKRNAGLTCGGYKVIHCSGYLKIRQYSLDMSPFDGCYQNVGLVAVGHSLPPSAVTEIKLHSNMFMFRASLDMKLIFLDSRVAELTGYEPQDLIEKTLYHHVHGCDTFHLRCAHHLLLVKGQVTTKYYRFLAKQGGWVWVQSYATIVHNSRSSRPHCIVSVNYVLTDTEYKGLQLSLDQISASKPTFSYTSSSTPTISDNRKGAKSRLSSSKSKSRTSPYPQYSGFHTERSESDHDSQWGGSPLTDTASPQLLDPERPGSQHELSCAYRQFPDRSSLCYGFALDHSRLVEDRHFHTQACEGGRCEAGRYFLGAPPTGRDPWWGSRAALPLTKASPESREAYENSMPHITSIHRIHGRGHWDEDSVVSSPDPGSASESGDRYRTEQYQNSPHEPSKIETLIRATQQMIKEEENRLQLRKAPPDQLASINGAGKKHSLCFANYQQPPPTGEVCHSSALASTSPCDHIQQREGKMLSPHENDYDNSPTALSRISSPSSDRITKSSLILAKDYLHSDMSPHQTAGDHPAISPNCFGSHRQYFDKHAYTLTGYALEHLYDSETIRNYSLGCNGSHFDVTSHLRMQPDPAQGHKGTSVIITNGS.

One can recognise a bHLH domain in the interval 1-53 (MKEKSKNAARTRREKENSEFYELAKLLPLPSAITSQLDKASIIRLTTSYLKMR). 2 consecutive PAS domains span residues 77–147 (GREL…QPYH) and 218–288 (PPSA…LVKG). The 44-residue stretch at 292–335 (TKYYRFLAKQGGWVWVQSYATIVHNSRSSRPHCIVSVNYVLTDT) folds into the PAC domain. One can recognise a Single-minded C-terminal domain in the interval 336 to 765 (EYKGLQLSLD…GTSVIITNGS (430 aa)). Low complexity-rich tracts occupy residues 352 to 365 (PTFSYTSSSTPTIS) and 373 to 385 (SRLSSSKSKSRTS). Disordered regions lie at residues 352-428 (PTFS…PGSQ) and 527-560 (WDEDSVVSSPDPGSASESGDRYRTEQYQNSPHEP). Positions 368–387 (RKGAKSRLSSSKSKSRTSPY) match the Nuclear localization signal motif. Over residues 394 to 404 (HTERSESDHDS) the composition is skewed to basic and acidic residues.

As to quaternary structure, efficient DNA binding requires dimerization with another bHLH protein. Heterodimer; forms a heterodimer with ARNT, ARNT2. Detected in lung, skeletal muscle and kidney. During fetal development it is found in the CNS, developing kidney, mesodermal and endodermal tissues, including developing somites, mesonephric duct, and foregut.

Its subcellular location is the nucleus. Functionally, transcriptional factor that may have pleiotropic effects during embryogenesis and in the adult. The sequence is that of Single-minded homolog 1 (Sim1) from Mus musculus (Mouse).